The following is a 307-amino-acid chain: UPF0749 protein MT1871 (307 aa).

Positions methionine 1–alanine 23 are cleaved as a signal peptide. 2 helical membrane-spanning segments follow: residues valine 67–valine 87 and valine 152–threonine 172.

The protein belongs to the UPF0749 family.

It localises to the cell membrane. This is UPF0749 protein MT1871 from Mycobacterium tuberculosis (strain CDC 1551 / Oshkosh).